Consider the following 573-residue polypeptide: DEAD-box ATP-dependent RNA helicase 47A (573 aa).

Residues 131-159 carry the Q motif motif; that stretch reads KSFEELGLPPLLIDRLNKEGLTAPTEVQS. In terms of domain architecture, Helicase ATP-binding spans 162-362; sequence IPIISQKHDA…RSWGHDPVLV (201 aa). 175–182 lines the ATP pocket; sequence SYTGSGKT. The short motif at 293 to 296 is the DEAD box element; it reads DEVD. In terms of domain architecture, Helicase C-terminal spans 421–565; the sequence is TLRRCIHALE…PCEFTEGKLL (145 aa).

This sequence belongs to the DEAD box helicase family.

The catalysed reaction is ATP + H2O = ADP + phosphate + H(+). The polypeptide is DEAD-box ATP-dependent RNA helicase 47A (Oryza sativa subsp. japonica (Rice)).